The primary structure comprises 217 residues: MLITFEGIDGAGKSTQIKELVHALGLQGIEAVVLREPGGTTVAEKIRQILLESSHGITPVGELLLFSASRAELVQEVIRPALASGKTIILDRFFDSTTAYQGYGRGIDMELLRSIIAISTCGITPDITFYLDLEPEEALKRKYSKTSIPLAFEGEELDRMERSGLEFYRNVRRGYLDIKQLENRRFVQLNALDPVAVIHGKILALLGERFPSFLNPV.

An ATP-binding site is contributed by 7-14; that stretch reads GIDGAGKS.

Belongs to the thymidylate kinase family.

The enzyme catalyses dTMP + ATP = dTDP + ADP. Phosphorylation of dTMP to form dTDP in both de novo and salvage pathways of dTTP synthesis. The polypeptide is Thymidylate kinase (Pelodictyon phaeoclathratiforme (strain DSM 5477 / BU-1)).